Reading from the N-terminus, the 245-residue chain is Ureidoacrylate amidohydrolase RutB (245 aa).

Residue Asp-41 is the Proton acceptor of the active site. Lys-150 is a catalytic residue. Catalysis depends on Cys-183, which acts as the Nucleophile.

This sequence belongs to the isochorismatase family. RutB subfamily.

It catalyses the reaction (Z)-3-ureidoacrylate + H2O + H(+) = (Z)-3-aminoacrylate + NH4(+) + CO2. It carries out the reaction (Z)-3-ureidoacrylate + H2O = (Z)-3-aminoacrylate + carbamate + H(+). The catalysed reaction is (Z)-2-methylureidoacrylate + H2O + H(+) = (Z)-2-methylaminoacrylate + NH4(+) + CO2. Hydrolyzes ureidoacrylate to form aminoacrylate and carbamate. The carbamate hydrolyzes spontaneously, thereby releasing one of the nitrogen atoms of the pyrimidine ring as ammonia and one of its carbon atoms as CO2. This is Ureidoacrylate amidohydrolase RutB from Pseudomonas savastanoi pv. phaseolicola (strain 1448A / Race 6) (Pseudomonas syringae pv. phaseolicola (strain 1448A / Race 6)).